We begin with the raw amino-acid sequence, 476 residues long: Bifunctional protein HldE (476 aa).

The ribokinase stretch occupies residues 1–318 (MAQYSAEFKQ…ENAIHARPET (318 aa)). 195–198 (NMSE) serves as a coordination point for ATP. Residue D264 is part of the active site. The interval 344 to 476 (MTNGCFDILH…VIEKIKLLKD (133 aa)) is cytidylyltransferase.

This sequence in the N-terminal section; belongs to the carbohydrate kinase PfkB family. It in the C-terminal section; belongs to the cytidylyltransferase family. Homodimer.

The catalysed reaction is D-glycero-beta-D-manno-heptose 7-phosphate + ATP = D-glycero-beta-D-manno-heptose 1,7-bisphosphate + ADP + H(+). It catalyses the reaction D-glycero-beta-D-manno-heptose 1-phosphate + ATP + H(+) = ADP-D-glycero-beta-D-manno-heptose + diphosphate. Its pathway is nucleotide-sugar biosynthesis; ADP-L-glycero-beta-D-manno-heptose biosynthesis; ADP-L-glycero-beta-D-manno-heptose from D-glycero-beta-D-manno-heptose 7-phosphate: step 1/4. The protein operates within nucleotide-sugar biosynthesis; ADP-L-glycero-beta-D-manno-heptose biosynthesis; ADP-L-glycero-beta-D-manno-heptose from D-glycero-beta-D-manno-heptose 7-phosphate: step 3/4. In terms of biological role, catalyzes the phosphorylation of D-glycero-D-manno-heptose 7-phosphate at the C-1 position to selectively form D-glycero-beta-D-manno-heptose-1,7-bisphosphate. Its function is as follows. Catalyzes the ADP transfer from ATP to D-glycero-beta-D-manno-heptose 1-phosphate, yielding ADP-D-glycero-beta-D-manno-heptose. The protein is Bifunctional protein HldE of Haemophilus influenzae (strain 86-028NP).